The primary structure comprises 381 residues: Bifunctional polyhydroxybutyrate synthase / ABC transporter periplasmic binding protein (381 aa).

A signal peptide spans 1–22 (MSKTFARSSLCALSMTIMTAHA).

This sequence belongs to the bacterial solute-binding protein PotD/PotF family.

It is found in the periplasm. The catalysed reaction is (3R)-3-hydroxybutanoyl-CoA + [(3R)-hydroxybutanoate](n) = [(3R)-hydroxybutanoate](n+1) + CoA. In terms of biological role, catalyzes the formation of short polymers of R-3-hydroxybutyrate (cPHB). Involved in natural transformation. Probably part of the ABC transporter complex YdcSTUV. During natural transformation, may bind dsDNA and convey it to the inner membrane channel formed by YdcV. The sequence is that of Bifunctional polyhydroxybutyrate synthase / ABC transporter periplasmic binding protein (ydcS) from Escherichia coli (strain K12).